The sequence spans 425 residues: Adenylosuccinate synthetase (425 aa).

GTP contacts are provided by residues 12-18 and 40-42; these read GDEGKGK and GHT. Residue Asp13 is the Proton acceptor of the active site. 2 residues coordinate Mg(2+): Asp13 and Gly40. Residues 13-16, 38-41, Thr126, Arg140, Gln221, Thr236, and Arg300 contribute to the IMP site; these read DEGK and NAGH. The active-site Proton donor is His41. 296–302 lines the substrate pocket; sequence ATTGRPR. GTP contacts are provided by residues Arg302, 328–330, and 410–412; these read KLD and STG.

Belongs to the adenylosuccinate synthetase family. In terms of assembly, homodimer. Mg(2+) serves as cofactor.

It localises to the cytoplasm. The enzyme catalyses IMP + L-aspartate + GTP = N(6)-(1,2-dicarboxyethyl)-AMP + GDP + phosphate + 2 H(+). It participates in purine metabolism; AMP biosynthesis via de novo pathway; AMP from IMP: step 1/2. Its function is as follows. Plays an important role in the de novo pathway of purine nucleotide biosynthesis. Catalyzes the first committed step in the biosynthesis of AMP from IMP. This is Adenylosuccinate synthetase from Thermodesulfovibrio yellowstonii (strain ATCC 51303 / DSM 11347 / YP87).